Consider the following 118-residue polypeptide: Cell division protein FtsB (118 aa).

Over 1–6 the chain is Cytoplasmic; that stretch reads MRNWRW. The helical transmembrane segment at 7 to 24 threads the bilayer; the sequence is LLLVLAALLSWLQHRFWF. Over 25-118 the chain is Periplasmic; that stretch reads GPGNSGEVRM…DLAQPRREKR (94 aa). Residues 30 to 66 are a coiled coil; sequence GEVRMLQVQIVQQHQENERLRQRNASLAAEVKNLKDG. Residues 97–118 form a disordered region; the sequence is PLPNDTSADHGVDLAQPRREKR. The segment covering 103–118 has biased composition (basic and acidic residues); the sequence is SADHGVDLAQPRREKR.

This sequence belongs to the FtsB family. Part of a complex composed of FtsB, FtsL and FtsQ.

Its subcellular location is the cell inner membrane. In terms of biological role, essential cell division protein. May link together the upstream cell division proteins, which are predominantly cytoplasmic, with the downstream cell division proteins, which are predominantly periplasmic. This chain is Cell division protein FtsB, found in Xylella fastidiosa (strain 9a5c).